The chain runs to 308 residues: MQEKITQFENFLAQLQQKITSTLEQSETSSAKFISDKWQKPDTPEQKLKGYGNSMIIEGGEIFEKGVVAFSRVHGDALPPSATAKRQELAGKSFIATGVSLVIHPRNPFVPTSHANFRIFVAGADTDNPIWWFGGGFDLTPYYPFEEDAIHWHQTAKNICDKHDASYYPSFKKLCDEYFYLKHRDECRGVGGLFFDDLNDKSFDECFKFVTDCANSYLDAYIPIVEKRKNIEYSQKHKDFQLYRRGRYVEFNLVFDRGTIFGLQSGGRTESILSSMPPMATWKYNWQPEPGSEEEKVYEYIKPRDWIK.

A substrate-binding site is contributed by S100. 2 residues coordinate a divalent metal cation: H104 and H114. The active-site Proton donor is H114. 116-118 provides a ligand contact to substrate; that stretch reads NFR. A divalent metal cation is bound by residues H153 and H183. Residues 248–283 are important for dimerization; sequence YVEFNLVFDRGTIFGLQSGGRTESILSSMPPMATWK. Substrate is bound at residue 266 to 268; it reads GGR.

Belongs to the aerobic coproporphyrinogen-III oxidase family. In terms of assembly, homodimer. The cofactor is a divalent metal cation.

It localises to the cytoplasm. It catalyses the reaction coproporphyrinogen III + O2 + 2 H(+) = protoporphyrinogen IX + 2 CO2 + 2 H2O. Its pathway is porphyrin-containing compound metabolism; protoporphyrin-IX biosynthesis; protoporphyrinogen-IX from coproporphyrinogen-III (O2 route): step 1/1. Its function is as follows. Involved in the heme biosynthesis. Catalyzes the aerobic oxidative decarboxylation of propionate groups of rings A and B of coproporphyrinogen-III to yield the vinyl groups in protoporphyrinogen-IX. The protein is Oxygen-dependent coproporphyrinogen-III oxidase of Francisella philomiragia subsp. philomiragia (strain ATCC 25017 / CCUG 19701 / FSC 153 / O#319-036).